We begin with the raw amino-acid sequence, 652 residues long: Sodium-dependent phosphate transporter 1-A (652 aa).

Residues 1 to 25 are Cytoplasmic-facing; the sequence is MESTTLASLAAVSVLAAGAQTDMSD. Residues 26-46 form a helical membrane-spanning segment; it reads VLWLLILGFVIAFILAFSVGA. Residues 47 to 66 are Extracellular-facing; it reads NDVANSFGTAVGSGVVTLRQ. The chain crosses the membrane as a helical span at residues 67-87; the sequence is ACILATIFETVGAMLLGAKVS. Residues 88 to 104 lie on the Cytoplasmic side of the membrane; it reads ETIRSGIIDVHMYNGSE. A helical transmembrane segment spans residues 105 to 125; it reads AVLMAGSISAMFGSAVWQLAA. The Extracellular segment spans residues 126–162; sequence SFLKLPISGTHCIVGATIGFSMVARGHQGVKWLELLR. The helical transmembrane segment at 163-183 threads the bilayer; the sequence is IVASWFLSPLLSGIMSAVLFY. Topologically, residues 184 to 201 are cytoplasmic; sequence FVRKFILNKDDPVPNGLR. Residues 202 to 222 form a helical membrane-spanning segment; it reads ALPVFYAVTMGINLFSIMFTG. Residues 223-234 are Extracellular-facing; it reads APMLGFDRIPWW. Residues 235–255 traverse the membrane as a helical segment; the sequence is GTLLISLGCAILTALVVWFIV. Residues 256-482 are Cytoplasmic-facing; it reads CPRLKKKMQS…IDELEIDKPE (227 aa). The tract at residues 278–308 is disordered; that stretch reads TQLVEKKPSSNGLMDHHPGPPRNYSPVPQTP. Residues 281–295 show a composition bias toward basic and acidic residues; the sequence is VEKKPSSNGLMDHHP. Pro residues predominate over residues 297 to 308; it reads PPRNYSPVPQTP. A helical membrane pass occupies residues 483–503; that stretch reads VSTLFQFLQILTACFGSFAHG. At 504-531 the chain is on the extracellular side; that stretch reads GNDVSNAIGPLVALWLIYDSASVAPSAP. A helical transmembrane segment spans residues 532-552; that stretch reads TPIWLLLYGGVGICTGLWIWG. Topologically, residues 553-571 are cytoplasmic; the sequence is RRVIQTMGKDLTPITPSSG. The chain crosses the membrane as a helical span at residues 572–592; sequence FSIELASAITVVVASNIGLPV. Residues 593-621 lie on the Extracellular side of the membrane; that stretch reads STTHCKVGSVVSVGWLRSRKAVDWHLFRN. The helical transmembrane segment at 622 to 642 threads the bilayer; that stretch reads IFIAWFVTVPISGLISAAIMA. Over 643–652 the chain is Cytoplasmic; it reads LFYYVILPLT.

This sequence belongs to the inorganic phosphate transporter (PiT) (TC 2.A.20) family.

The protein resides in the membrane. Sodium-phosphate symporter which plays a fundamental housekeeping role in phosphate transport. The chain is Sodium-dependent phosphate transporter 1-A (slc20a1a) from Danio rerio (Zebrafish).